We begin with the raw amino-acid sequence, 1011 residues long: DNA-directed RNA polymerase 2, chloroplastic/mitochondrial (1011 aa).

Residues 307–326 (KGDDNEESGGVENETSMKEQ) form a disordered region. Active-site residues include D712, K787, and D944.

It belongs to the phage and mitochondrial RNA polymerase family. In terms of assembly, interacts with NIP1 and NIP2.

The protein localises to the plastid. The protein resides in the chloroplast. Its subcellular location is the mitochondrion. The catalysed reaction is RNA(n) + a ribonucleoside 5'-triphosphate = RNA(n+1) + diphosphate. In terms of biological role, DNA-dependent RNA polymerase catalyzes the transcription of DNA into RNA using the four ribonucleoside triphosphates as substrates. The polypeptide is DNA-directed RNA polymerase 2, chloroplastic/mitochondrial (RPOT2) (Arabidopsis thaliana (Mouse-ear cress)).